The chain runs to 313 residues: Ribosomal RNA small subunit methyltransferase H (313 aa).

S-adenosyl-L-methionine is bound by residues 33–35, aspartate 53, phenylalanine 80, aspartate 101, and glutamine 108; that span reads GGH. A disordered region spans residues 282–313; sequence LVHNKPLTPSEAEIEQNPRARSAKLRVAQKLA.

This sequence belongs to the methyltransferase superfamily. RsmH family.

Its subcellular location is the cytoplasm. It carries out the reaction cytidine(1402) in 16S rRNA + S-adenosyl-L-methionine = N(4)-methylcytidine(1402) in 16S rRNA + S-adenosyl-L-homocysteine + H(+). In terms of biological role, specifically methylates the N4 position of cytidine in position 1402 (C1402) of 16S rRNA. The protein is Ribosomal RNA small subunit methyltransferase H of Magnetococcus marinus (strain ATCC BAA-1437 / JCM 17883 / MC-1).